The chain runs to 466 residues: D-inositol 3-phosphate glycosyltransferase (466 aa).

A compositionally biased stretch (low complexity) spans 1–12 (MRPMRAGAGAAG). The segment at 1 to 22 (MRPMRAGAGAAGESCKDDGVRP) is disordered. A 1D-myo-inositol 3-phosphate-binding site is contributed by His43. Residues 49-50 (QP) and Gly57 contribute to the UDP-N-acetyl-alpha-D-glucosamine site. 1D-myo-inositol 3-phosphate contacts are provided by residues 54–59 (DAGGMN), Lys112, Tyr145, Thr169, and Arg189. Residues Arg263, Lys268, and Gln321 each coordinate UDP-N-acetyl-alpha-D-glucosamine. The Mg(2+) site is built by Phe330, His331, and Val333. UDP-N-acetyl-alpha-D-glucosamine is bound by residues Glu343 and Glu351. Thr357 lines the Mg(2+) pocket. Positions 446–466 (VRDPVAARKPRRWTARRGVGA) are disordered.

It belongs to the glycosyltransferase group 1 family. MshA subfamily. As to quaternary structure, homodimer.

The enzyme catalyses 1D-myo-inositol 3-phosphate + UDP-N-acetyl-alpha-D-glucosamine = 1D-myo-inositol 2-acetamido-2-deoxy-alpha-D-glucopyranoside 3-phosphate + UDP + H(+). In terms of biological role, catalyzes the transfer of a N-acetyl-glucosamine moiety to 1D-myo-inositol 3-phosphate to produce 1D-myo-inositol 2-acetamido-2-deoxy-glucopyranoside 3-phosphate in the mycothiol biosynthesis pathway. The chain is D-inositol 3-phosphate glycosyltransferase from Mycobacterium marinum (strain ATCC BAA-535 / M).